Reading from the N-terminus, the 610-residue chain is Ubiquilin-like protein (610 aa).

In terms of domain architecture, Ubiquitin-like spans 31-105 (IRVIVKTPGN…IHVVIKSKHG (75 aa)). The UBA domain occupies 562 to 607 (QAPEVRFSKEMECLQAMGFVNYNANLQALIATDGDTNAAIYKLKSS).

The polypeptide is Ubiquilin-like protein (Ubqlnl) (Mus musculus (Mouse)).